The primary structure comprises 686 residues: Soluble guanylate cyclase gcy-34 (686 aa).

Residue histidine 105 coordinates heme. Coiled coils occupy residues lysine 306–glutamine 335 and valine 398–methionine 432. One can recognise a Guanylate cyclase domain in the interval threonine 455–glutamate 583. Aspartate 460 and aspartate 504 together coordinate Mg(2+).

The protein belongs to the adenylyl cyclase class-4/guanylyl cyclase family. In terms of assembly, heterodimer; with other soluble guanylate cyclases. Requires heme as cofactor. As to expression, expressed in a small number of neurons, corresponding to URX, AQR and PQR neurons.

It is found in the cytoplasm. It carries out the reaction GTP = 3',5'-cyclic GMP + diphosphate. With respect to regulation, may be regulated by molecular oxygen. Probably not activated by nitric oxide (NO). In terms of biological role, synthesizes cyclic GMP (cGMP) from GTP. May be involved in sensitivity to quinine by regulating egl-4 activity through the production of cGMP. In Caenorhabditis elegans, this protein is Soluble guanylate cyclase gcy-34 (gcy-34).